The primary structure comprises 396 residues: RNA-binding motif protein, X chromosome (396 aa).

Met-1 carries the N-acetylmethionine; in Heterogeneous nuclear ribonucleoprotein G; alternate modification. N-acetylvaline; in Heterogeneous nuclear ribonucleoprotein G, N-terminally processed is present on Val-2. Positions Gly-8–Lys-86 constitute an RRM domain. Lys-22 participates in a covalent cross-link: Glycyl lysine isopeptide (Lys-Gly) (interchain with G-Cter in SUMO2). N6-acetyllysine is present on Lys-30. Glycyl lysine isopeptide (Lys-Gly) (interchain with G-Cter in SUMO2) cross-links involve residues Lys-80 and Lys-86. Residues Ala-84–Tyr-396 form a disordered region. Ser-91 bears the Phosphoserine mark. Omega-N-methylarginine is present on residues Arg-122, Arg-141, Arg-162, and Arg-170. Pro residues predominate over residues Arg-148–Arg-162. Composition is skewed to basic and acidic residues over residues Arg-185–Pro-205 and Tyr-241–Asp-275. The tract at residues Gly-186 to Pro-236 is necessary for the association to nascent RNAPII transcripts and nuclear localization. The segment covering Tyr-323–Gly-332 has biased composition (gly residues). The segment covering Arg-334 to Arg-350 has biased composition (basic and acidic residues). Phosphoserine is present on residues Ser-335 and Ser-355. Residues Glu-336–Tyr-396 are necessary for RNA-binding.

Homomultimer. Found in the supraspliceosome complex. Identified in the spliceosome C complex. Forms a complex with ILF2, ILF3, YLPM1, KHDRBS1, NCOA5 and PPP1CA. Interacts with CLK2, KHDRBS2, KHDRBS3, SAFB/SAFB1, TRA2B and YTHDC1. Interacts with ERAP1; the interaction is RNA-independent. Post-translationally, O-glycosylated. In terms of processing, arg-185 is dimethylated, probably to asymmetric dimethylarginine.

Its subcellular location is the nucleus. Functionally, RNA-binding protein that plays several role in the regulation of pre- and post-transcriptional processes. Implicated in tissue-specific regulation of gene transcription and alternative splicing of several pre-mRNAs. Binds to and stimulates transcription from the tumor suppressor TXNIP gene promoter; may thus be involved in tumor suppression. When associated with SAFB, binds to and stimulates transcription from the SREBF1 promoter. Associates with nascent mRNAs transcribed by RNA polymerase II. Component of the supraspliceosome complex that regulates pre-mRNA alternative splice site selection. Can either activate or suppress exon inclusion; acts additively with TRA2B to promote exon 7 inclusion of the survival motor neuron SMN2. Represses the splicing of MAPT/Tau exon 10. Binds preferentially to single-stranded 5'-CC[A/C]-rich RNA sequence motifs localized in a single-stranded conformation; probably binds RNA as a homodimer. Binds non-specifically to pre-mRNAs. Also plays a role in the cytoplasmic TNFR1 trafficking pathways; promotes both the IL-1-beta-mediated inducible proteolytic cleavage of TNFR1 ectodomains and the release of TNFR1 exosome-like vesicles to the extracellular compartment. The protein is RNA-binding motif protein, X chromosome (RBMX) of Bos taurus (Bovine).